The sequence spans 183 residues: Large ribosomal subunit protein uL5 (183 aa).

This sequence belongs to the universal ribosomal protein uL5 family. Part of the 50S ribosomal subunit; part of the 5S rRNA/L5/L18/L25 subcomplex. Contacts the 5S rRNA and the P site tRNA. Forms a bridge to the 30S subunit in the 70S ribosome.

Functionally, this is one of the proteins that bind and probably mediate the attachment of the 5S RNA into the large ribosomal subunit, where it forms part of the central protuberance. In the 70S ribosome it contacts protein S13 of the 30S subunit (bridge B1b), connecting the 2 subunits; this bridge is implicated in subunit movement. Contacts the P site tRNA; the 5S rRNA and some of its associated proteins might help stabilize positioning of ribosome-bound tRNAs. In Legionella pneumophila (strain Lens), this protein is Large ribosomal subunit protein uL5.